Here is a 149-residue protein sequence, read N- to C-terminus: Arginine repressor (149 aa).

This sequence belongs to the ArgR family.

Its subcellular location is the cytoplasm. It participates in amino-acid biosynthesis; L-arginine biosynthesis [regulation]. In terms of biological role, regulates arginine biosynthesis genes. This is Arginine repressor from Geobacillus thermodenitrificans (strain NG80-2).